Consider the following 100-residue polypeptide: Small ribosomal subunit protein uS14 (100 aa).

Belongs to the universal ribosomal protein uS14 family. Part of the 30S ribosomal subunit. Contacts proteins S3 and S10.

Binds 16S rRNA, required for the assembly of 30S particles and may also be responsible for determining the conformation of the 16S rRNA at the A site. The protein is Small ribosomal subunit protein uS14 of Synechococcus sp. (strain RCC307).